The sequence spans 296 residues: Ribonuclease MRP protein subunit POP4 (296 aa).

Disordered stretches follow at residues 29 to 74 and 148 to 173; these read LLQQ…VDPK and SASGSKKASQKDSKRSKSRMSMKRLK. The span at 36–56 shows a compositional bias: basic and acidic residues; it reads KNEKDKKGTSDVDVSMKESHQ. Over residues 57–66 the composition is skewed to polar residues; sequence ADSLPTPSKT. The Nuclear localization signal motif lies at 160–167; it reads SKRSKSRM. Over residues 163-173 the composition is skewed to basic residues; it reads SKSRMSMKRLK.

The protein belongs to the eukaryotic/archaeal RNase P protein component 1 family. Component of nuclear RNase MRP complexes. Several subunits of RNase P are also part of the RNase MRP complex. RNase MRP consists of a catalytic RNA moiety and several protein subunits.

Its subcellular location is the nucleus. In terms of biological role, component of the MRP ribonuclease complex, which cleaves pre-rRNA sequences. Required for rRNA maturation, including 5.8S rRNA processing. Seems not involved in tRNA maturation. In Arabidopsis thaliana (Mouse-ear cress), this protein is Ribonuclease MRP protein subunit POP4.